Reading from the N-terminus, the 346-residue chain is Sugar utilization regulatory protein IMP2 (346 aa).

The segment covering 1-29 (MQKSILLTKPDGTQSNLHSIKTETPTTVE) has biased composition (polar residues). Disordered regions lie at residues 1–74 (MQKS…RVRE) and 91–132 (LRVV…DIEN). Thr24 bears the Phosphothreonine mark. Over residues 40 to 49 (RERGRSKKKR) the composition is skewed to basic residues. The segment covering 96–132 (VDSEEEGEGNDEDDDDGDGDDMDEEESDEEQVSDIEN) has biased composition (acidic residues).

Its function is as follows. Controls the nucleo-mitochondrial dependence of galactose, maltose and raffinose utilization. Becomes essential in the absence of functioning mitochondria. This Saccharomyces cerevisiae (strain ATCC 204508 / S288c) (Baker's yeast) protein is Sugar utilization regulatory protein IMP2 (IMP2').